The chain runs to 209 residues: 3-demethoxyubiquinol 3-hydroxylase (209 aa).

Fe cation-binding residues include Glu-58, Glu-88, His-91, Glu-140, Glu-172, and His-175.

It belongs to the COQ7 family. Fe cation serves as cofactor.

Its subcellular location is the cell membrane. It catalyses the reaction a 5-methoxy-2-methyl-3-(all-trans-polyprenyl)benzene-1,4-diol + AH2 + O2 = a 3-demethylubiquinol + A + H2O. It participates in cofactor biosynthesis; ubiquinone biosynthesis. Functionally, catalyzes the hydroxylation of 2-nonaprenyl-3-methyl-6-methoxy-1,4-benzoquinol during ubiquinone biosynthesis. This chain is 3-demethoxyubiquinol 3-hydroxylase, found in Polaromonas sp. (strain JS666 / ATCC BAA-500).